Reading from the N-terminus, the 363-residue chain is MRVVLKLGTSVLTAGTDRLHRPRLVDLLRGIAEVRAAGHEVVLVTSGAVLAGWEALGFPPRERTLAEKQLLAAVGQGRLMHLYASIADLYGMPVAQVLLTADDFRDRTRYLNARTTLEGCLTRGVLPIINENDTVAVEQIKVGDNDTLSAFVANLVEADLLVILTDAPGLYTADPRIDPTATLIPVVERVTPEVWALAGGAGSHRGTGGMHTKLQAAEIATRAGTPVVIAPGDAENALARIVRGEALGTRFLAHGSRLEARKRWILAEIATGRLLLDEGAVRAVRERGGSLLPAGITTVHGPFERGHTVRLLAPDGSEVARGLTRYRADDLKRIAGRHSRDIEAVLGFTYGPEAVHRDDLVRL.

Residue K6 participates in ATP binding. Substrate-binding residues include S46, D133, and N145. Residues 165–166 (TD) and 207–213 (TGGMHTK) contribute to the ATP site. The region spanning 271 to 349 (TGRLLLDEGA…RDIEAVLGFT (79 aa)) is the PUA domain.

It belongs to the glutamate 5-kinase family.

Its subcellular location is the cytoplasm. It carries out the reaction L-glutamate + ATP = L-glutamyl 5-phosphate + ADP. The protein operates within amino-acid biosynthesis; L-proline biosynthesis; L-glutamate 5-semialdehyde from L-glutamate: step 1/2. In terms of biological role, catalyzes the transfer of a phosphate group to glutamate to form L-glutamate 5-phosphate. The chain is Glutamate 5-kinase from Deinococcus geothermalis (strain DSM 11300 / CIP 105573 / AG-3a).